A 448-amino-acid chain; its full sequence is Extracellular serine protease (448 aa).

The signal sequence occupies residues 1–20 (MKLSHLSLAIISAITLAACG). The tract at residues 87–109 (KELENQASDDEVDPTKTGVVGNL) is disordered.

This sequence belongs to the peptidase S17 family. Requires a divalent metal cation as cofactor.

Functionally, this enzyme is a chymotrypsin-like serine protease. Degrades a variety of substrates present in the skin and hoof of the sheep, including elastin, keratin, fibrinogen and collagen. It seems to play an important role in the pathogenesis of sheep footrot. This chain is Extracellular serine protease (prvA), found in Dichelobacter nodosus (Bacteroides nodosus).